The sequence spans 419 residues: DNA ligase (419 aa).

The tract at residues 1–120 is NTD; it reads MLSQFPGQCS…ARQKRGAHTN (120 aa). The AD domain stretch occupies residues 121–317; sequence RGMIPPMLVK…NYHSPHLAKL (197 aa). 4 residues coordinate ATP: histidine 149, lysine 151, glutamate 203, and phenylalanine 232. Lysine 151 (N6-AMP-lysine intermediate) is an active-site residue. An a divalent metal cation-binding site is contributed by glutamate 203. Glutamate 291 is a binding site for a divalent metal cation. ATP-binding residues include isoleucine 294 and lysine 316. The OB domain stretch occupies residues 318 to 419; it reads KPLLDAEFIL…REPINVLEII (102 aa).

This sequence belongs to the ATP-dependent DNA ligase family. The cofactor is a divalent metal cation.

It localises to the virion. The enzyme catalyses ATP + (deoxyribonucleotide)n-3'-hydroxyl + 5'-phospho-(deoxyribonucleotide)m = (deoxyribonucleotide)n+m + AMP + diphosphate.. In terms of biological role, very low-fidelity DNA ligase that seals nicks in double-stranded DNA during DNA repair. Together with the viral repair DNA polymerase X, fills the single nucleotide gaps generated by the AP endonuclease. It is not essential for viral replication and recombination. Displays a very low adenylation activity towards DNA with 3'-dideoxy- or 3'-amino-terminated nicks compared to regular nick DNA. The chain is DNA ligase (LIG) from Ornithodoros (relapsing fever ticks).